The following is a 169-amino-acid chain: Probable NADH dehydrogenase [ubiquinone] 1 alpha subcomplex subunit 5, mitochondrial (169 aa).

The transit peptide at Met1–Leu11 directs the protein to the mitochondrion.

The protein belongs to the complex I NDUFA5 subunit family. As to quaternary structure, complex I is composed of at least 49 different subunits.

The protein resides in the mitochondrion inner membrane. Accessory subunit of the mitochondrial membrane respiratory chain NADH dehydrogenase (Complex I), that is believed not to be involved in catalysis. Complex I functions in the transfer of electrons from NADH to the respiratory chain. The immediate electron acceptor for the enzyme is believed to be ubiquinone. The polypeptide is Probable NADH dehydrogenase [ubiquinone] 1 alpha subcomplex subunit 5, mitochondrial (Arabidopsis thaliana (Mouse-ear cress)).